The following is a 357-amino-acid chain: Homoarginine-6-hydroxylase 2-ODD-C23.2 (357 aa).

The 101-residue stretch at 208-308 folds into the Fe2OG dioxygenase domain; that stretch reads PFWVMRIIGY…RVCVAFFYET (101 aa). His-231, Asp-233, and His-289 together coordinate Fe cation. Position 299 (Arg-299) interacts with 2-oxoglutarate.

It belongs to the iron/ascorbate-dependent oxidoreductase family. Fe(2+) is required as a cofactor. In terms of tissue distribution, expressed in senescent leaves.

Its subcellular location is the cytoplasm. The protein localises to the cytosol. It catalyses the reaction L-homoarginine + 2-oxoglutarate + O2 = 6-hydroxy-L-homoarginine + succinate + CO2. It carries out the reaction L-arginine + 2-oxoglutarate + O2 = 5-hydroxy-L-arginine + succinate + CO2. Slightly inhibited by canavanine (Can), the 5-oxa-analog of arginine. Functionally, 2-oxoglutarate-dependent dioxygenase catalyzing homoarginine 6-hydroxylation and arginine-5-hydroxylation thus producing 6-hydroxy-L-homoarginine and 5-hydroxy-L-arginine, respectively. Guanidine (Gd) is in turn synthesized by the spontaneous conversion of 6-hydroxy-L-homoarginine and 5-hydroxy-L-arginine to (S)-2-amino-6-oxohexanoate (RHEA:79843) and L-glutamate 5-semialdehyde (RHEA:31527); guanidine is a nitrogen-rich compound that may serve as a defense or signaling substance. The chain is Homoarginine-6-hydroxylase 2-ODD-C23.2 from Arabidopsis thaliana (Mouse-ear cress).